We begin with the raw amino-acid sequence, 345 residues long: Succinylglutamate desuccinylase (345 aa).

Zn(2+)-binding residues include H63, E66, and H160. Residue E224 is part of the active site.

The protein belongs to the AspA/AstE family. Succinylglutamate desuccinylase subfamily. The cofactor is Zn(2+).

The catalysed reaction is N-succinyl-L-glutamate + H2O = L-glutamate + succinate. The protein operates within amino-acid degradation; L-arginine degradation via AST pathway; L-glutamate and succinate from L-arginine: step 5/5. Functionally, transforms N(2)-succinylglutamate into succinate and glutamate. The polypeptide is Succinylglutamate desuccinylase (Shewanella woodyi (strain ATCC 51908 / MS32)).